The primary structure comprises 356 residues: UDP-3-O-acylglucosamine N-acyltransferase (356 aa).

His242 acts as the Proton acceptor in catalysis.

This sequence belongs to the transferase hexapeptide repeat family. LpxD subfamily. As to quaternary structure, homotrimer.

It carries out the reaction a UDP-3-O-[(3R)-3-hydroxyacyl]-alpha-D-glucosamine + a (3R)-hydroxyacyl-[ACP] = a UDP-2-N,3-O-bis[(3R)-3-hydroxyacyl]-alpha-D-glucosamine + holo-[ACP] + H(+). Its pathway is bacterial outer membrane biogenesis; LPS lipid A biosynthesis. Its function is as follows. Catalyzes the N-acylation of UDP-3-O-acylglucosamine using 3-hydroxyacyl-ACP as the acyl donor. Is involved in the biosynthesis of lipid A, a phosphorylated glycolipid that anchors the lipopolysaccharide to the outer membrane of the cell. The polypeptide is UDP-3-O-acylglucosamine N-acyltransferase (Acinetobacter baumannii (strain ACICU)).